The sequence spans 156 residues: Ribosomal RNA large subunit methyltransferase H (156 aa).

S-adenosyl-L-methionine is bound by residues Leu-73, Gly-104, and 123 to 128 (VSSLTL).

It belongs to the RNA methyltransferase RlmH family. In terms of assembly, homodimer.

It localises to the cytoplasm. The enzyme catalyses pseudouridine(1915) in 23S rRNA + S-adenosyl-L-methionine = N(3)-methylpseudouridine(1915) in 23S rRNA + S-adenosyl-L-homocysteine + H(+). Specifically methylates the pseudouridine at position 1915 (m3Psi1915) in 23S rRNA. This chain is Ribosomal RNA large subunit methyltransferase H, found in Paraburkholderia xenovorans (strain LB400).